A 129-amino-acid polypeptide reads, in one-letter code: uncharacterized protein (129 aa).

It belongs to the HesB/IscA family.

This is an uncharacterized protein from Buchnera aphidicola subsp. Schizaphis graminum (strain Sg).